A 310-amino-acid polypeptide reads, in one-letter code: Delta(1)-pyrroline-2-carboxylate reductase 1 (310 aa).

Belongs to the ornithine cyclodeaminase/mu-crystallin family.

The catalysed reaction is L-proline + NAD(+) = 1-pyrroline-2-carboxylate + NADH + H(+). It carries out the reaction L-proline + NADP(+) = 1-pyrroline-2-carboxylate + NADPH + H(+). Functionally, catalyzes the reduction of Delta(1)-pyrroline-2-carboxylate (Pyr2C) to L-proline, using NADPH as the electron donor. May be involved in a degradation pathway that converts trans-3-hydroxy-L-proline (t3LHyp) to L-proline. This chain is Delta(1)-pyrroline-2-carboxylate reductase 1, found in Burkholderia multivorans (strain ATCC 17616 / 249).